The chain runs to 206 residues: Thymidylate kinase (206 aa).

11 to 18 lines the ATP pocket; it reads GIDGAGKT.

The protein belongs to the thymidylate kinase family.

It catalyses the reaction dTMP + ATP = dTDP + ADP. Functionally, phosphorylation of dTMP to form dTDP in both de novo and salvage pathways of dTTP synthesis. In Burkholderia vietnamiensis (strain G4 / LMG 22486) (Burkholderia cepacia (strain R1808)), this protein is Thymidylate kinase.